The primary structure comprises 429 residues: Serine--tRNA ligase (429 aa).

236–238 (TAE) serves as a coordination point for L-serine. Residue 267 to 269 (RRE) coordinates ATP. Glu-290 lines the L-serine pocket. 354–357 (EISS) lines the ATP pocket. Ser-390 lines the L-serine pocket.

This sequence belongs to the class-II aminoacyl-tRNA synthetase family. Type-1 seryl-tRNA synthetase subfamily. As to quaternary structure, homodimer. The tRNA molecule binds across the dimer.

Its subcellular location is the cytoplasm. The catalysed reaction is tRNA(Ser) + L-serine + ATP = L-seryl-tRNA(Ser) + AMP + diphosphate + H(+). It carries out the reaction tRNA(Sec) + L-serine + ATP = L-seryl-tRNA(Sec) + AMP + diphosphate + H(+). It participates in aminoacyl-tRNA biosynthesis; selenocysteinyl-tRNA(Sec) biosynthesis; L-seryl-tRNA(Sec) from L-serine and tRNA(Sec): step 1/1. Catalyzes the attachment of serine to tRNA(Ser). Is also able to aminoacylate tRNA(Sec) with serine, to form the misacylated tRNA L-seryl-tRNA(Sec), which will be further converted into selenocysteinyl-tRNA(Sec). The polypeptide is Serine--tRNA ligase (Gloeobacter violaceus (strain ATCC 29082 / PCC 7421)).